The primary structure comprises 123 residues: uncharacterized protein (123 aa).

Positions 76-97 are disordered; that stretch reads ENNKRKKKSEGERVRSPRTFRG.

This is an uncharacterized protein from Saccharomyces cerevisiae (strain ATCC 204508 / S288c) (Baker's yeast).